Reading from the N-terminus, the 156-residue chain is Small ribosomal subunit protein uS7 (156 aa).

It belongs to the universal ribosomal protein uS7 family. As to quaternary structure, part of the 30S ribosomal subunit. Contacts proteins S9 and S11.

Functionally, one of the primary rRNA binding proteins, it binds directly to 16S rRNA where it nucleates assembly of the head domain of the 30S subunit. Is located at the subunit interface close to the decoding center, probably blocks exit of the E-site tRNA. The polypeptide is Small ribosomal subunit protein uS7 (Allorhizobium ampelinum (strain ATCC BAA-846 / DSM 112012 / S4) (Agrobacterium vitis (strain S4))).